Reading from the N-terminus, the 219-residue chain is Histidinol-phosphate aminotransferase (219 aa).

It belongs to the class-II pyridoxal-phosphate-dependent aminotransferase family. Histidinol-phosphate aminotransferase subfamily. As to quaternary structure, homodimer. Pyridoxal 5'-phosphate serves as cofactor.

The catalysed reaction is L-histidinol phosphate + 2-oxoglutarate = 3-(imidazol-4-yl)-2-oxopropyl phosphate + L-glutamate. It participates in amino-acid biosynthesis; L-histidine biosynthesis; L-histidine from 5-phospho-alpha-D-ribose 1-diphosphate: step 7/9. The polypeptide is Histidinol-phosphate aminotransferase (hisC) (Mycolicibacterium smegmatis (Mycobacterium smegmatis)).